A 261-amino-acid chain; its full sequence is 1-(5-phosphoribosyl)-5-[(5-phosphoribosylamino)methylideneamino] imidazole-4-carboxamide isomerase (261 aa).

Aspartate 15 functions as the Proton acceptor in the catalytic mechanism. Aspartate 136 serves as the catalytic Proton donor.

It belongs to the HisA/HisF family.

It is found in the cytoplasm. The catalysed reaction is 1-(5-phospho-beta-D-ribosyl)-5-[(5-phospho-beta-D-ribosylamino)methylideneamino]imidazole-4-carboxamide = 5-[(5-phospho-1-deoxy-D-ribulos-1-ylimino)methylamino]-1-(5-phospho-beta-D-ribosyl)imidazole-4-carboxamide. Its pathway is amino-acid biosynthesis; L-histidine biosynthesis; L-histidine from 5-phospho-alpha-D-ribose 1-diphosphate: step 4/9. The chain is 1-(5-phosphoribosyl)-5-[(5-phosphoribosylamino)methylideneamino] imidazole-4-carboxamide isomerase from Synechococcus sp. (strain JA-2-3B'a(2-13)) (Cyanobacteria bacterium Yellowstone B-Prime).